Here is a 410-residue protein sequence, read N- to C-terminus: MVRVRAVVMARDDSSGGWLPVGGGGLSQVSVCRVRGARPEGGARQGHYVIHGERLRDQKTTLECTLKPGLVYNKVNPIFHHWSLGDCKFGLTFQSPAEADEFQKSLLAALAALGRGSLTPSSSSSSSSPSQDTAETPCPLTSHVDSDSSSSHSRQETPPSAAAAPIITMESASGFGPTTPPQRRRSSAQSYPPLLPFTGIPEPSEPLAGAGGLGWGGRGYEDYRRSGPPAPLALSTCVVRFAKTGALRGAALGPPAALPAPLTEAAPPAPPARPPPGPGPSSAPAKASPEAEEAARCVHCRALFRRRADGRGGRCAEAPDPGRLLVRRLSCLWCAESLLYHCLSDAEGDFSDPCACEPGHPRPAARWAALAALSLAVPCLCCYAPLRACHWVAARCGCAGCGGRHEEAAR.

The 113-residue stretch at 1 to 113 (MVRVRAVVMA…KSLLAALAAL (113 aa)) folds into the WH1 domain. Residues 117–210 (SLTPSSSSSS…PEPSEPLAGA (94 aa)) form a disordered region. 2 stretches are compositionally biased toward low complexity: residues 120–130 (PSSSSSSSSPS) and 147–165 (DSSS…AAAP). One can recognise a KBD domain in the interval 195–244 (LPFTGIPEPSEPLAGAGGLGWGGRGYEDYRRSGPPAPLALSTCVVRFAKT). Asymmetric dimethylarginine is present on Arg-240. Arg-248 is subject to Omega-N-methylarginine. The interval 258–288 (LPAPLTEAAPPAPPARPPPGPGPSSAPAKAS) is disordered. The segment covering 267–281 (PPAPPARPPPGPGPS) has biased composition (pro residues). The 112-residue stretch at 296-407 (RCVHCRALFR…CAGCGGRHEE (112 aa)) folds into the SPR domain.

Interacts with palmitoyltransferase ZDHHC17/HIP14; the interaction leads to palmitoylation of SPRED3. In terms of processing, phosphorylated on tyrosine. Palmitoylated by ZDHHC17/HIP14. Post-translationally, ubiquitinated.

It is found in the cell membrane. Functionally, tyrosine kinase substrate that inhibits growth-factor-mediated activation of MAP kinase. Inhibits fibroblast growth factor (FGF)-induced retinal lens fiber differentiation, probably by inhibiting FGF-mediated phosphorylation of ERK1/2. Inhibits TGFB-induced epithelial-to-mesenchymal transition in lens epithelial cells. The sequence is that of Sprouty-related, EVH1 domain-containing protein 3 (SPRED3) from Homo sapiens (Human).